Consider the following 697-residue polypeptide: SPX domain-containing membrane protein OsI_08463 (697 aa).

The 144-residue stretch at 2 to 145 (VNFGKRLMAD…GYKFTDYYVS (144 aa)) folds into the SPX domain. Helical transmembrane passes span 247-267 (FMSL…TYII), 278-298 (LGAA…AQVF), 315-335 (LVFS…AYDV), 338-356 (LTVL…ARAV), 375-395 (AGFV…AGLL), 411-431 (LPGW…WISF), 513-533 (LLIY…SSVV), 544-564 (TVAM…VIVG), 576-596 (ILVA…RFTS), 604-624 (VSSA…NLSL), and 670-690 (LLNV…VATF).

The protein belongs to the major facilitator superfamily.

It localises to the membrane. The chain is SPX domain-containing membrane protein OsI_08463 from Oryza sativa subsp. indica (Rice).